The sequence spans 453 residues: Putative dipeptidase UREG_03382 (453 aa).

The tract at residues 1–33 (MSTRDHVKQSPMPVQEGYPRSSKEFSPPSSRSR) is disordered. Residues 41–63 (LTMSLLIAAGAATFSKYIFPLGS) form a helical membrane-spanning segment. H95, D97, and E208 together coordinate Zn(2+). The cysteines at positions 147 and 223 are disulfide-linked. Position 221 (H221) interacts with substrate. Positions 265 and 286 each coordinate Zn(2+). R297 and D357 together coordinate substrate. N-linked (GlcNAc...) asparagine glycosylation is found at N370 and N443.

The protein belongs to the metallo-dependent hydrolases superfamily. Peptidase M19 family. It depends on Zn(2+) as a cofactor.

The protein resides in the membrane. It carries out the reaction an L-aminoacyl-L-amino acid + H2O = 2 an L-alpha-amino acid. Functionally, hydrolyzes a wide range of dipeptides. The polypeptide is Putative dipeptidase UREG_03382 (Uncinocarpus reesii (strain UAMH 1704)).